The following is a 476-amino-acid chain: MVLINRVNIQPEELPLLYHVNSMDVYNLLQDIGSSKIIIDLRTKEQYEKNHIRTSVNIPPPPSTTPLYENGEIKEFNLSKYIGSNVTAKHWNLIFQKLIVYSDKPFLYNIDELEKTISTTTITTTATTTTTTTTTSNSIGSDQDIIKSLKVSDWDKVVLRHFLLKKKKTKVIIYQGGFDQFQKDYSFMCNPSSSPSSSSGGGGGSQLYPSEIIKDFLYLGGAENAGNRQQLINLKITHLVNMAGELDDVYPHLYKYYRANLDDRPKANIYEHFEPVIQFINDCKKQGGRVLIHCAMGISRSTTVVLAYLMKEDHMTYSDAFTFCKQKRSCINPNFGFVKQLKDYQQHLTLEWEKQEKLKKQQQQTLNINNNNTGIPLSKKLQLDVSDPLSNSSPSSPLISSTLPIPETPPAIILKNEVASPCPIKTTTSSTTINNKGQQQDKAQEEKDSIFSYADKQEKMTHPTLHSPIELPQSSL.

One can recognise a Rhodanese domain in the interval 32–190 (IGSSKIIIDL…FQKDYSFMCN (159 aa)). In terms of domain architecture, Tyrosine-protein phosphatase spans 208-350 (YPSEIIKDFL…LKDYQQHLTL (143 aa)). Residue Cys294 is the Phosphocysteine intermediate of the active site. Positions 425–436 (KTTTSSTTINNK) are enriched in low complexity. The disordered stretch occupies residues 425–476 (KTTTSSTTINNKGQQQDKAQEEKDSIFSYADKQEKMTHPTLHSPIELPQSSL). Residues 442 to 461 (KAQEEKDSIFSYADKQEKMT) are compositionally biased toward basic and acidic residues.

Belongs to the protein-tyrosine phosphatase family. Non-receptor class dual specificity subfamily.

The enzyme catalyses O-phospho-L-tyrosyl-[protein] + H2O = L-tyrosyl-[protein] + phosphate. The catalysed reaction is O-phospho-L-seryl-[protein] + H2O = L-seryl-[protein] + phosphate. It carries out the reaction O-phospho-L-threonyl-[protein] + H2O = L-threonyl-[protein] + phosphate. Functionally, has a dual specificity toward Ser/Thr and Tyr-containing proteins. The polypeptide is Probable rhodanese domain-containing dual specificity protein phosphatase (Dictyostelium discoideum (Social amoeba)).